The primary structure comprises 85 residues: MKLLLLLTISASMLIEGLVNADGYIRGGDGCKVSCVINHVFCDNECKAAGGSYGYCWGWGLACWCEGLPAEREWDYETNTCGGKK.

Residues 1-21 (MKLLLLLTISASMLIEGLVNA) form the signal peptide. The region spanning 22–82 (DGYIRGGDGC…EWDYETNTCG (61 aa)) is the LCN-type CS-alpha/beta domain. Cystine bridges form between Cys31-Cys81, Cys35-Cys56, Cys42-Cys63, and Cys46-Cys65. Glycine amide is present on Gly82.

The protein belongs to the long (4 C-C) scorpion toxin superfamily. Sodium channel inhibitor family. Beta subfamily. As to expression, expressed by the venom gland.

The protein localises to the secreted. In terms of biological role, depressant insect beta-toxins cause a transient contraction paralysis followed by a slow flaccid paralysis. They bind voltage-independently at site-4 of sodium channels (Nav) and block action potentials, primarily by depolarizing the axonal membrane and suppressing the sodium current. This depressant toxin is active only on insects. It is found in a relatively small amount in the venom, and its activity on insects is 10-fold higher compared to other known depressant toxins. The protein is Beta-insect depressant toxin Lqh-dprIT3d of Leiurus hebraeus (Hebrew deathstalker scorpion).